A 290-amino-acid polypeptide reads, in one-letter code: Sodium/potassium-transporting ATPase subunit beta-2 (290 aa).

The Cytoplasmic segment spans residues 1–39; the sequence is MVIQKEKKSCGQVVEEWKEFVWNPRTHQFMGRTGTSWAF. A helical; Signal-anchor for type II membrane protein transmembrane segment spans residues 40-67; sequence ILLFYLVFYGFLTAMFSLTMWVMLQTVS. Residues 68–290 are Extracellular-facing; that stretch reads DHTPKYQDRL…VAFKLRINKT (223 aa). Residues Asn-96 and Asn-118 are each glycosylated (N-linked (GlcNAc...) asparagine). A disulfide bridge connects residues Cys-129 and Cys-150. Asn-153 carries N-linked (GlcNAc...) asparagine glycosylation. A disulfide bridge connects residues Cys-160 and Cys-177. Residues Asn-193, Asn-197, Asn-220, and Asn-238 are each glycosylated (N-linked (GlcNAc...) asparagine). An immunoglobulin-like region spans residues 193–290; the sequence is NQSMNVTCVG…VAFKLRINKT (98 aa). A disulfide bond links Cys-200 and Cys-261.

This sequence belongs to the X(+)/potassium ATPases subunit beta family. The sodium/potassium-transporting ATPase is composed of a catalytic alpha subunit, an auxiliary non-catalytic beta subunit and an additional regulatory subunit. Interacts with isoform 2 of BSG.

The protein resides in the cell membrane. Functionally, this is the non-catalytic component of the active enzyme, which catalyzes the hydrolysis of ATP coupled with the exchange of Na(+) and K(+) ions across the plasma membrane. The exact function of the beta-2 subunit is not known. In terms of biological role, mediates cell adhesion of neurons and astrocytes, and promotes neurite outgrowth. The polypeptide is Sodium/potassium-transporting ATPase subunit beta-2 (Atp1b2) (Mus musculus (Mouse)).